We begin with the raw amino-acid sequence, 146 residues long: Hemoglobin subunit theta (146 aa).

The 145-residue stretch at 2-146 (HFTAEEKSVI…VATALAHKYH (145 aa)) folds into the Globin domain. His63 and His92 together coordinate heme b.

The protein belongs to the globin family.

In Sus scrofa (Pig), this protein is Hemoglobin subunit theta.